We begin with the raw amino-acid sequence, 994 residues long: Bifunctional glutamine synthetase adenylyltransferase/adenylyl-removing enzyme (994 aa).

The adenylyl removase stretch occupies residues 1 to 487 (MVVTKLATQR…LHTKLFYQPL (487 aa)). The segment at 492 to 994 (GPTGLEIAHG…KAVVRKVFGS (503 aa)) is adenylyl transferase.

The protein belongs to the GlnE family. It depends on Mg(2+) as a cofactor.

It catalyses the reaction [glutamine synthetase]-O(4)-(5'-adenylyl)-L-tyrosine + phosphate = [glutamine synthetase]-L-tyrosine + ADP. The catalysed reaction is [glutamine synthetase]-L-tyrosine + ATP = [glutamine synthetase]-O(4)-(5'-adenylyl)-L-tyrosine + diphosphate. Functionally, involved in the regulation of glutamine synthetase GlnA, a key enzyme in the process to assimilate ammonia. When cellular nitrogen levels are high, the C-terminal adenylyl transferase (AT) inactivates GlnA by covalent transfer of an adenylyl group from ATP to specific tyrosine residue of GlnA, thus reducing its activity. Conversely, when nitrogen levels are low, the N-terminal adenylyl removase (AR) activates GlnA by removing the adenylyl group by phosphorolysis, increasing its activity. The regulatory region of GlnE binds the signal transduction protein PII (GlnB) which indicates the nitrogen status of the cell. This is Bifunctional glutamine synthetase adenylyltransferase/adenylyl-removing enzyme from Mycobacterium bovis (strain ATCC BAA-935 / AF2122/97).